Consider the following 895-residue polypeptide: uncharacterized protein (895 aa).

Residue N2–L19 participates in NAD(+) binding. C261 is a catalytic residue. Residues L468–I614 enclose the DOD-type homing endonuclease domain.

The protein belongs to the UDP-glucose/GDP-mannose dehydrogenase family. This protein undergoes a protein self splicing that involves a post-translational excision of the intervening region (intein) followed by peptide ligation.

This is an uncharacterized protein from Methanocaldococcus jannaschii (strain ATCC 43067 / DSM 2661 / JAL-1 / JCM 10045 / NBRC 100440) (Methanococcus jannaschii).